The following is a 90-amino-acid chain: MVKNLFISVIPQEEKEKNKGSVEFQVFNFTNKIRRLTAHLEFHRKDYLSQRGLRKILGKRQRLLAYLSKKNRVRYKELIGQLDIREPKTR.

Belongs to the universal ribosomal protein uS15 family. As to quaternary structure, part of the 30S ribosomal subunit.

It localises to the plastid. It is found in the chloroplast. This is Small ribosomal subunit protein uS15c (rps15) from Drimys granadensis.